A 491-amino-acid polypeptide reads, in one-letter code: Probable G-protein coupled receptor Mth-like 7 (491 aa).

The first 22 residues, 1-22, serve as a signal peptide directing secretion; it reads MRLPWVIFCTVLLLIFTNNSNA. N18 and N42 each carry an N-linked (GlcNAc...) asparagine glycan. The Extracellular portion of the chain corresponds to 23-167; that stretch reads DIPGCNYYDT…EEVSIQIFNK (145 aa). 3 cysteine pairs are disulfide-bonded: C27/C80, C82/C87, and C92/C103. A helical membrane pass occupies residues 168 to 188; sequence CGLIVWFQDGKFWVTVDLFME. Topologically, residues 189 to 222 are cytoplasmic; the sequence is KQDYCLYRHNFDSDFPKSMWIIRHRCTSHISPGS. Residues 223-243 form a helical membrane-spanning segment; the sequence is LEILIITMICFVLTIAVYLYI. The Extracellular segment spans residues 244-252; that stretch reads KKLRNVTGK. A glycan (N-linked (GlcNAc...) asparagine) is linked at N248. A helical transmembrane segment spans residues 253 to 273; that stretch reads CIVCCIVSRFIQCLIMILDHL. At 274–325 the chain is on the cytoplasmic side; sequence NLLNGICSPAGYSSHFFRMASNLWLSVISYHTWKVLTSLNRVDPNYRFLRYN. Residues 326-346 traverse the membrane as a helical segment; the sequence is AFVWSTAAIMTGSIYIVNQIW. Residues 347 to 372 lie on the Extracellular side of the membrane; sequence ENDPSKWNWLPLVGFIRCSVKDWHPS. Residues 373 to 393 form a helical membrane-spanning segment; sequence VWIYISGPSLALSTFNVAMFA. The Cytoplasmic portion of the chain corresponds to 394–434; sequence LTAIYIRKVKGGINKFTNEEEGRINCINFDSQTYLQFLRLS. Residues 435-455 form a helical membrane-spanning segment; that stretch reads IVMGLTWIFNVIPYSARLHIF. At 456-458 the chain is on the extracellular side; that stretch reads WEW. Residues 459–479 traverse the membrane as a helical segment; that stretch reads VGIISEYFHSAFGIVLFVLLV. Residues 480–491 lie on the Cytoplasmic side of the membrane; that stretch reads LKRSTWTLMMDS.

The protein belongs to the G-protein coupled receptor 2 family. Mth subfamily.

It localises to the cell membrane. This Drosophila melanogaster (Fruit fly) protein is Probable G-protein coupled receptor Mth-like 7 (mthl7).